The following is a 152-amino-acid chain: Superoxide dismutase [Cu-Zn] (152 aa).

Positions 45, 47, and 62 each coordinate Cu cation. Cys56 and Cys145 are joined by a disulfide. The Zn(2+) site is built by His62, His70, His79, and Asp82. His119 serves as a coordination point for Cu cation.

It belongs to the Cu-Zn superoxide dismutase family. In terms of assembly, homodimer. The cofactor is Cu cation. Zn(2+) is required as a cofactor.

It localises to the cytoplasm. It catalyses the reaction 2 superoxide + 2 H(+) = H2O2 + O2. Its function is as follows. Destroys radicals which are normally produced within the cells and which are toxic to biological systems. This is Superoxide dismutase [Cu-Zn] (SODCC) from Ipomoea batatas (Sweet potato).